A 233-amino-acid chain; its full sequence is Protein DEHYDRATION-INDUCED 19 homolog 2 (233 aa).

The segment at 176–215 is disordered; that stretch reads DLHSDSSDNNFLLNKFPDDKTAERAEPSLSEKDQKERAQR. The segment covering 191–214 has biased composition (basic and acidic residues); the sequence is FPDDKTAERAEPSLSEKDQKERAQ.

It belongs to the Di19 family.

The polypeptide is Protein DEHYDRATION-INDUCED 19 homolog 2 (DI19-2) (Oryza sativa subsp. japonica (Rice)).